A 296-amino-acid polypeptide reads, in one-letter code: tRNA dimethylallyltransferase (296 aa).

2 to 9 (GPTASGKT) contacts ATP. Residue 4–9 (TASGKT) coordinates substrate. Interaction with substrate tRNA stretches follow at residues 27–30 (DSAL), 151–155 (QRLSR), and 232–237 (RCVGYR).

The protein belongs to the IPP transferase family. Monomer. Mg(2+) serves as cofactor.

The catalysed reaction is adenosine(37) in tRNA + dimethylallyl diphosphate = N(6)-dimethylallyladenosine(37) in tRNA + diphosphate. Its function is as follows. Catalyzes the transfer of a dimethylallyl group onto the adenine at position 37 in tRNAs that read codons beginning with uridine, leading to the formation of N6-(dimethylallyl)adenosine (i(6)A). The polypeptide is tRNA dimethylallyltransferase (Shewanella baltica (strain OS155 / ATCC BAA-1091)).